The following is a 276-amino-acid chain: Bis(5'-nucleosyl)-tetraphosphatase, symmetrical (276 aa).

The protein belongs to the Ap4A hydrolase family.

The catalysed reaction is P(1),P(4)-bis(5'-adenosyl) tetraphosphate + H2O = 2 ADP + 2 H(+). Functionally, hydrolyzes diadenosine 5',5'''-P1,P4-tetraphosphate to yield ADP. In Legionella pneumophila (strain Lens), this protein is Bis(5'-nucleosyl)-tetraphosphatase, symmetrical.